A 193-amino-acid polypeptide reads, in one-letter code: p53 apoptosis effector related to PMP-22 (193 aa).

4 helical membrane passes run 12 to 32, 79 to 99, 110 to 130, and 151 to 171; these read RWIL…ALAG, AMLF…FFAL, VIGG…VIYP, and WAYG…FFFC.

The protein belongs to the TMEM47 family. As to quaternary structure, (Microbial infection) Interacts with S.typhimurium sipA and sctB1/sipC. As to expression, expressed in skin, heart, placental, liver, pancreas, keratinocytes and dermal fibroblasts. May translocate to the intestinal apical epithelial cell surface via sipA and sctB1/sipC-promoted exocytic translocation following infection by S. Typhimurium.

It is found in the cell junction. Its subcellular location is the desmosome. The protein localises to the cell membrane. The protein resides in the cytoplasm. Component of intercellular desmosome junctions. Plays a role in stratified epithelial integrity and cell-cell adhesion by promoting desmosome assembly. Thereby plays a role in barrier function of the skin against infection. Plays a role in mammary epithelial tissue homeostasis and remodeling during and after pregnancy, potentially via its involvement in desmosome cell-cell junctions. Required for tooth enamel development via facilitating desmosome-mediated ameloblast adhesion to the stratum intermedium during the transitional stage of amelogenesis. May also play a role in downstream transcriptional regulation of other genes involved in amelogenesis such as AMBN, ENAM, MMP20 and KLK4. Plays a role as an effector in the TP53-dependent apoptotic pathway. Positively regulates apoptosis in T-helper 17 (Th17) cell populations via caspase-dependent signaling. Promotes neutrophil transepithelial migration in response to chemoattractants such as hepoxilin A3 (HXA3), N-Formylmethionyl-leucyl-phenylalanine (fMLP) and CXCL8/IL-8. Required for neutrophil transepithelial migration in response to S.typhimurium infection. May act as a positive regulator of endothelial cell apoptosis in response to blood flow-derived shear stress. The protein is p53 apoptosis effector related to PMP-22 of Homo sapiens (Human).